A 310-amino-acid polypeptide reads, in one-letter code: tRNA dimethylallyltransferase (310 aa).

24–31 (GPTASGKT) contributes to the ATP binding site. 26 to 31 (TASGKT) provides a ligand contact to substrate. The interaction with substrate tRNA stretch occupies residues 49-52 (DSRQ).

It belongs to the IPP transferase family. As to quaternary structure, monomer. Requires Mg(2+) as cofactor.

The enzyme catalyses adenosine(37) in tRNA + dimethylallyl diphosphate = N(6)-dimethylallyladenosine(37) in tRNA + diphosphate. In terms of biological role, catalyzes the transfer of a dimethylallyl group onto the adenine at position 37 in tRNAs that read codons beginning with uridine, leading to the formation of N6-(dimethylallyl)adenosine (i(6)A). The chain is tRNA dimethylallyltransferase from Synechococcus sp. (strain WH7803).